The primary structure comprises 572 residues: uncharacterized protein (572 aa).

A disordered region spans residues 553–572; that stretch reads PSPAPKPVTVRKKKGNSPIS. Residues 561 to 572 show a composition bias toward basic residues; the sequence is TVRKKKGNSPIS.

This is an uncharacterized protein from Homo sapiens (Human).